Here is a 505-residue protein sequence, read N- to C-terminus: MFS efflux pump atnC (505 aa).

12 helical membrane-spanning segments follow: residues 48 to 68 (VLQV…GLTV), 117 to 137 (LIGW…IPYG), 148 to 168 (VLLL…LVCW), 181 to 201 (LFQC…ATIA), 216 to 236 (LQAT…VLMA), 240 to 260 (WTPC…LIAL), 304 to 324 (VAGL…LDFL), 343 to 363 (LSLR…LLLF), 377 to 399 (LLIA…LSPT), 403 to 425 (AILV…ASLW), 439 to 459 (TVAI…SLMY), and 469 to 489 (WVGL…GVLL).

It belongs to the major facilitator superfamily.

Its subcellular location is the membrane. It functions in the pathway secondary metabolite biosynthesis. Its function is as follows. MFS efflux pump; part of the gene cluster that mediates the biosynthesis of aspercryptins, linear lipopeptides built from six amino acids including 2 highly unusual and nonproteogenic amino acids, 2-amino-octanoic acid (2aoa) and 2-amino-dodecanol (2adol). In Emericella nidulans (strain FGSC A4 / ATCC 38163 / CBS 112.46 / NRRL 194 / M139) (Aspergillus nidulans), this protein is MFS efflux pump atnC.